The sequence spans 997 residues: Autophagy-related protein 9 (997 aa).

Residues 1 to 318 are Cytoplasmic-facing; sequence MERDEYQLPN…DVYNYYLGNG (318 aa). S19 is modified (phosphoserine). Residues 29–39 are compositionally biased toward polar residues; the sequence is VNPSLNSQEMS. A disordered region spans residues 29-88; that stretch reads VNPSLNSQEMSNFPLPDIERGSSLLHSTNDSREDVDENDLRVPESDQGTSTEEEDEVDEE. Acidic residues predominate over residues 79–88; sequence TEEEDEVDEE. Residues K113 and K121 each participate in a glycyl lysine isopeptide (Lys-Gly) (interchain with G-Cter in ubiquitin) cross-link. S122 carries the post-translational modification Phosphoserine. Disordered stretches follow at residues 127-159 and 214-234; these read LVEGSTDDSVPKVGQLSSEEEEDNEFINNDGFD and HHDKDKSANNGPRNINGNQKH. Residue K138 forms a Glycyl lysine isopeptide (Lys-Gly) (interchain with G-Cter in ubiquitin) linkage. A phosphoserine mark is found at S143 and S144. Residues 144-159 show a composition bias toward acidic residues; it reads SEEEEDNEFINNDGFD. A compositionally biased stretch (polar residues) spans 221-233; that stretch reads ANNGPRNINGNQK. Residues 319–339 traverse the membrane as a helical segment; the sequence is FYCIILEKILNICTLLFVVFV. At 340–376 the chain is on the lumenal side; it reads STYMGHCVDYSKLPTSHRVSDIIIDKCYSNSITGFTK. The helical transmembrane segment at 377 to 397 threads the bilayer; the sequence is FFLWMFYFFVILKIVQLYFDV. Topologically, residues 398-538 are cytoplasmic; sequence QKLSELQNFY…EELQKRFMLA (141 aa). The stretch at 539-559 is an intramembrane region; that stretch reads GFLNIILAPFLVTYFVLLYFF. Over 560–620 the chain is Cytoplasmic; that stretch reads RYFNEYKTSP…DQFPKEKTNL (61 aa). The chain crosses the membrane as a helical span at residues 621-641; that stretch reads FLKFVSFICGSFVAILAFLTV. The Lumenal portion of the chain corresponds to 642-656; it reads FDPENFLNFEITSDR. Residue S657 is modified to Phosphoserine. The chain crosses the membrane as a helical span at residues 657–677; sequence SVIFYITILGAIWSVSRNTIT. At 678 to 723 the chain is on the cytoplasmic side; the sequence is QEYHVFDPEETLKELYEYTHYLPKEWEGRYHKEEIKLEFCKLYNLR. K701 participates in a covalent cross-link: Glycyl lysine isopeptide (Lys-Gly) (interchain with G-Cter in ubiquitin). The stretch at 724-744 is an intramembrane region; the sequence is IVILLRELTSLMITPFVLWFS. Over 745-997 the chain is Cytoplasmic; sequence LPSSAGRIVD…EYYKKSDVGR (253 aa). A phosphoserine mark is found at S787 and S792. T794 is subject to Phosphothreonine. S802 bears the Phosphoserine mark. Residue T804 is modified to Phosphothreonine. Phosphoserine occurs at positions 831, 842, 864, 948, and 969.

This sequence belongs to the ATG9 family. In terms of assembly, homotrimer; forms a homotrimer with a central pore that forms a path between the two membrane leaflets. Interacts with ATG23 and ATG27 to form a cycling complex for trafficking to the PAS. Interacts (via N-terminus) with ATG11, required for recruitment of ATG9 to the PAS for the Cvt pathway during nutrient-rich conditions. Interacts (via N-terminus) with ATG17; required for recruitment to the PAS during autophagy and starved conditions. Interacts with ATG2 and ATG18; required for the retrieval of ATG9 from the PAS to the cytoplasmic pool. Interacts with ATG41. Interacts with the conserved oligomeric Golgi (COG) complex subunits COG3 and COG4. Interacts with TRS85. In terms of processing, phosphorylated by ATG1; phosphorylation is required for autophagy and cytoplasm to vacuole transport (Cvt) vesicle formation. Phosphorylation by ATG1 regulates ATG18 interaction and preautophagosome elongation. Phosphorylation at Ser-122 is required for selective autophagy by regulating anterograde trafficking and interaction with ATG23 and ATG27. Phosphorylation at Ser-122 prevents ubiquitination by the SCF(MET30) complex. Ubiquitinated by the SCF(MET30) complex in normal conditions, leading to its degradation by the proteasome, thereby preventing inappropriate induction of autophagy. Ubiquitination by the SCF(MET30) complex is prevented by phosphorylation at Ser-122.

It localises to the preautophagosomal structure membrane. The protein resides in the cytoplasmic vesicle membrane. Its subcellular location is the golgi apparatus membrane. The protein localises to the endoplasmic reticulum membrane. It is found in the mitochondrion membrane. It catalyses the reaction a 1,2-diacyl-sn-glycero-3-phosphocholine(in) = a 1,2-diacyl-sn-glycero-3-phosphocholine(out). The enzyme catalyses a 1,2-diacyl-sn-glycero-3-phospho-L-serine(in) = a 1,2-diacyl-sn-glycero-3-phospho-L-serine(out). The catalysed reaction is a 1,2-diacyl-sn-glycero-3-phosphoethanolamine(in) = a 1,2-diacyl-sn-glycero-3-phosphoethanolamine(out). It carries out the reaction a 1,2-diacyl-sn-glycero-3-phospho-(1D-myo-inositol-3-phosphate)(in) = a 1,2-diacyl-sn-glycero-3-phospho-(1D-myo-inositol-3-phosphate)(out). Phospholipid scramblase involved in autophagy and cytoplasm to vacuole transport (Cvt) vesicle formation. Cycles between the preautophagosomal structure/phagophore assembly site (PAS) and the cytoplasmic vesicle pool and supplies membrane for the growing autophagosome. Lipid scramblase activity plays a key role in preautophagosomal structure/phagophore assembly by distributing the phospholipids that arrive through ATG2 from the cytoplasmic to the luminal leaflet of the bilayer, thereby driving autophagosomal membrane expansion. Required for mitophagy. Also involved in endoplasmic reticulum-specific autophagic process and is essential for the survival of cells subjected to severe ER stress. Different machineries are required for anterograde trafficking to the PAS during either the Cvt pathway or bulk autophagy and for retrograde trafficking. Recruits vesicle-tethering proteins TRS85 and YPT1 to the autophagosome formation site. Also recruits ATG23 and ATG8 to the PAS. The sequence is that of Autophagy-related protein 9 from Saccharomyces cerevisiae (strain YJM789) (Baker's yeast).